The sequence spans 598 residues: NADH-quinone oxidoreductase subunit C/D (598 aa).

The segment at 1–188 (MTDSTTHDAL…DPFVLTKQKE (188 aa)) is NADH dehydrogenase I subunit C. The NADH dehydrogenase I subunit D stretch occupies residues 212-598 (DFMFLNLGPN…IDFVMSDVDR (387 aa)).

In the N-terminal section; belongs to the complex I 30 kDa subunit family. It in the C-terminal section; belongs to the complex I 49 kDa subunit family. In terms of assembly, NDH-1 is composed of 13 different subunits. Subunits NuoB, CD, E, F, and G constitute the peripheral sector of the complex.

It is found in the cell inner membrane. It carries out the reaction a quinone + NADH + 5 H(+)(in) = a quinol + NAD(+) + 4 H(+)(out). Its function is as follows. NDH-1 shuttles electrons from NADH, via FMN and iron-sulfur (Fe-S) centers, to quinones in the respiratory chain. The immediate electron acceptor for the enzyme in this species is believed to be ubiquinone. Couples the redox reaction to proton translocation (for every two electrons transferred, four hydrogen ions are translocated across the cytoplasmic membrane), and thus conserves the redox energy in a proton gradient. The protein is NADH-quinone oxidoreductase subunit C/D of Serratia proteamaculans (strain 568).